The sequence spans 343 residues: Cytoplasmic tRNA 2-thiolation protein 1 (343 aa).

This sequence belongs to the TtcA family. CTU1/NCS6/ATPBD3 subfamily.

The protein localises to the cytoplasm. It participates in tRNA modification; 5-methoxycarbonylmethyl-2-thiouridine-tRNA biosynthesis. In terms of biological role, plays a central role in 2-thiolation of mcm(5)S(2)U at tRNA wobble positions of tRNA(Lys), tRNA(Glu) and tRNA(Gln). Directly binds tRNAs and probably acts by catalyzing adenylation of tRNAs, an intermediate required for 2-thiolation. It is unclear whether it acts as a sulfurtransferase that transfers sulfur from thiocarboxylated URM1 onto the uridine of tRNAs at wobble position. This chain is Cytoplasmic tRNA 2-thiolation protein 1, found in Drosophila ananassae (Fruit fly).